Here is a 270-residue protein sequence, read N- to C-terminus: Interleukin-1 alpha (270 aa).

Positions 1–114 are excised as a propeptide; the sequence is MAKVPDLFED…HDLEETIQPR (114 aa). Asn-46 carries an N-linked (GlcNAc...) asparagine glycan. The residue at position 85 (Lys-85) is an N6-acetyllysine. Positions 85–89 are nuclear localization signal (NLS); the sequence is KKRRL. Ser-90 bears the Phosphoserine mark. N-linked (GlcNAc...) asparagine glycosylation is present at Asn-139.

Belongs to the IL-1 family. Monomer. Interacts with TMED10; the interaction mediates the translocation from the cytoplasm into the ERGIC (endoplasmic reticulum-Golgi intermediate compartment) and thereby secretion. Interacts with IL1R1. Interacts with S100A13; this interaction is the first step in the export of IL1A, followed by direct translocation of this complex across the plasma membrane. In terms of processing, acetylated within its nuclear localization sequence, which impacts subcellular localization. Proteolytic processed by CAPN1 in a calcium-dependent manner. Cleavage from 31 kDa precursor to 18 kDa biologically active molecules. Post-translationally, phosphorylated. Phosphorylation greatly enhances susceptibility to digestion and promotes the conversion of pre-IL1A alpha to the biologically active IL1A.

The protein resides in the nucleus. It localises to the cytoplasm. It is found in the secreted. Functionally, cytokine constitutively present intracellularly in nearly all resting non-hematopoietic cells that plays an important role in inflammation and bridges the innate and adaptive immune systems. After binding to its receptor IL1R1 together with its accessory protein IL1RAP, forms the high affinity interleukin-1 receptor complex. Signaling involves the recruitment of adapter molecules such as MYD88, IRAK1 or IRAK4. In turn, mediates the activation of NF-kappa-B and the three MAPK pathways p38, p42/p44 and JNK pathways. Within the cell, acts as an alarmin and cell death results in its liberation in the extracellular space after disruption of the cell membrane to induce inflammation and alert the host to injury or damage. In addition to its role as a danger signal, which occurs when the cytokine is passively released by cell necrosis, directly senses DNA damage and acts as signal for genotoxic stress without loss of cell integrity. The sequence is that of Interleukin-1 alpha from Rattus norvegicus (Rat).